A 282-amino-acid chain; its full sequence is Probable protein phosphatase 2C 10 (282 aa).

The 248-residue stretch at 34 to 281 (KFGYSLVKGK…DDISCIVVRL (248 aa)) folds into the PPM-type phosphatase domain. Residues aspartate 71, glycine 72, aspartate 233, and aspartate 272 each coordinate Mn(2+).

The protein belongs to the PP2C family. Mg(2+) serves as cofactor. The cofactor is Mn(2+).

It catalyses the reaction O-phospho-L-seryl-[protein] + H2O = L-seryl-[protein] + phosphate. The enzyme catalyses O-phospho-L-threonyl-[protein] + H2O = L-threonyl-[protein] + phosphate. The chain is Probable protein phosphatase 2C 10 from Arabidopsis thaliana (Mouse-ear cress).